The chain runs to 109 residues: Glutaredoxin-8 (109 aa).

The Glutaredoxin domain occupies 5–109 (VTKAEEMIKS…EELTKIGLLP (105 aa)). Cysteines 25 and 28 form a disulfide.

Belongs to the glutaredoxin family. Monomer.

Its subcellular location is the cytoplasm. Glutathione-dependent oxidoreductase with lower activity compared to the other members of the glutaredoxin family. The disulfide bond functions as an electron carrier in the glutathione-dependent synthesis of deoxyribonucleotides by the enzyme ribonucleotide reductase. The polypeptide is Glutaredoxin-8 (GRX8) (Saccharomyces cerevisiae (strain ATCC 204508 / S288c) (Baker's yeast)).